The primary structure comprises 124 residues: Small ribosomal subunit protein uS12 (124 aa).

At D89 the chain carries 3-methylthioaspartic acid.

Belongs to the universal ribosomal protein uS12 family. As to quaternary structure, part of the 30S ribosomal subunit. Contacts proteins S8 and S17. May interact with IF1 in the 30S initiation complex.

Its function is as follows. With S4 and S5 plays an important role in translational accuracy. In terms of biological role, interacts with and stabilizes bases of the 16S rRNA that are involved in tRNA selection in the A site and with the mRNA backbone. Located at the interface of the 30S and 50S subunits, it traverses the body of the 30S subunit contacting proteins on the other side and probably holding the rRNA structure together. The combined cluster of proteins S8, S12 and S17 appears to hold together the shoulder and platform of the 30S subunit. The sequence is that of Small ribosomal subunit protein uS12 from Shewanella oneidensis (strain ATCC 700550 / JCM 31522 / CIP 106686 / LMG 19005 / NCIMB 14063 / MR-1).